The chain runs to 157 residues: Transcription elongation factor GreA (157 aa).

Residues M1–V75 adopt a coiled-coil conformation.

This sequence belongs to the GreA/GreB family.

Necessary for efficient RNA polymerase transcription elongation past template-encoded arresting sites. The arresting sites in DNA have the property of trapping a certain fraction of elongating RNA polymerases that pass through, resulting in locked ternary complexes. Cleavage of the nascent transcript by cleavage factors such as GreA or GreB allows the resumption of elongation from the new 3'terminus. GreA releases sequences of 2 to 3 nucleotides. The chain is Transcription elongation factor GreA from Mycoplasma capricolum subsp. capricolum (strain California kid / ATCC 27343 / NCTC 10154).